Here is a 208-residue protein sequence, read N- to C-terminus: Large ribosomal subunit protein bL25 (208 aa).

Belongs to the bacterial ribosomal protein bL25 family. CTC subfamily. As to quaternary structure, part of the 50S ribosomal subunit; part of the 5S rRNA/L5/L18/L25 subcomplex. Contacts the 5S rRNA. Binds to the 5S rRNA independently of L5 and L18.

In terms of biological role, this is one of the proteins that binds to the 5S RNA in the ribosome where it forms part of the central protuberance. This chain is Large ribosomal subunit protein bL25, found in Burkholderia thailandensis (strain ATCC 700388 / DSM 13276 / CCUG 48851 / CIP 106301 / E264).